The chain runs to 501 residues: MXIAVVGAGVTGLAAAARLAAKGHQVTIFEKNEQVGGRMSQFKKDGFTFDMGPTIVMVPDVYKAVFEESGKRFEDYVDMKPLTHIFDIYFSDKDKVSVSTDLAQLSQTLEATEPGSTQGFMQFLTDVYKRYEVARKYFLERTFRKPSEFYNPLTLYRGLKLKTFNNANQLIDNYVSNEKIRKLLAFQTLYIGIDPKQGPSIYSIIPMIEMVHGVHYIKGGMYGLAQGLLQLGQDHGVKVELNADVQEIIIDPKFKRADGLRVNGDIRRFDKVLCTADFPYVAQNLMPVHSPLKNYSPEKVDNMDYSCSAFLIYAGINRQLRDKLHVHNVVFARDFRGNIDDIFSGKMPDDPSLYLYFPSVEDEALAPKDQTGMYVLMPVPELKTGEIDWNDPNMVEKAKDVIYNKLETIEALKDIRQDVVSETVFTPLDFESRYNAKFGSAFGLMPTLTQSNYYRPPNVSRDYKDLYFAGASTHPGAGVPIVLTSAKITAEAMLEDIEHGK.

Residue 5-17 (VVGAGVTGLAAAA) coordinates FAD.

It belongs to the carotenoid/retinoid oxidoreductase family. CrtN subfamily.

The enzyme catalyses 15-cis-4,4'-diapophytoene + 3 FAD + 3 H(+) = all-trans-4,4'-diaponeurosporene + 3 FADH2. The protein operates within carotenoid biosynthesis; staphyloxanthin biosynthesis; staphyloxanthin from farnesyl diphosphate: step 2/5. In terms of biological role, involved in the biosynthesis of the yellow-orange carotenoid staphyloxanthin, which plays a role in the virulence via its protective function against oxidative stress. Catalyzes three successive dehydrogenation reactions that lead to the introduction of three double bonds into 4,4'-diapophytoene (dehydrosqualene), with 4,4'-diapophytofluene and 4,4'-diapo-zeta-carotene as intermediates, and 4,4'-diaponeurosporene (the major deep-yellow pigment in staphylococci strains) as the end product. This is 4,4'-diapophytoene desaturase (4,4'-diaponeurosporene-forming) from Staphylococcus haemolyticus (strain JCSC1435).